Here is a 181-residue protein sequence, read N- to C-terminus: Mitochondrial inner membrane protein Mpv17 (181 aa).

4 helical membrane-spanning segments follow: residues 20–38 (VIVS…QYLT), 48–70 (TARF…FRVL), 91–113 (FMFS…GFSF), and 140–162 (LINF…AFFW).

Belongs to the peroxisomal membrane protein PXMP2/4 family.

It localises to the mitochondrion inner membrane. Functionally, involved in mitochondria homeostasis. The polypeptide is Mitochondrial inner membrane protein Mpv17 (Caenorhabditis briggsae).